Reading from the N-terminus, the 469-residue chain is Glutamate--tRNA ligase (469 aa).

Residues 12 to 22 (PSPTGFIHLGN) carry the 'HIGH' region motif. The 'KMSKS' region signature appears at 244–248 (KMSKR). Lys-247 is a binding site for ATP.

This sequence belongs to the class-I aminoacyl-tRNA synthetase family. Glutamate--tRNA ligase type 1 subfamily. As to quaternary structure, monomer.

Its subcellular location is the cytoplasm. It carries out the reaction tRNA(Glu) + L-glutamate + ATP = L-glutamyl-tRNA(Glu) + AMP + diphosphate. Functionally, catalyzes the attachment of glutamate to tRNA(Glu) in a two-step reaction: glutamate is first activated by ATP to form Glu-AMP and then transferred to the acceptor end of tRNA(Glu). In Acidovorax sp. (strain JS42), this protein is Glutamate--tRNA ligase.